A 46-amino-acid chain; its full sequence is Large ribosomal subunit protein bL34 (46 aa).

Belongs to the bacterial ribosomal protein bL34 family.

This Mycobacterium avium protein is Large ribosomal subunit protein bL34 (rpmH).